The sequence spans 374 residues: Chorismate synthase (374 aa).

R55 provides a ligand contact to NADP(+). Residues 132–134 (RGS), G293, 308–312 (KPTPS), and R335 contribute to the FMN site.

The protein belongs to the chorismate synthase family. FMNH2 serves as cofactor.

It catalyses the reaction 5-O-(1-carboxyvinyl)-3-phosphoshikimate = chorismate + phosphate. The protein operates within metabolic intermediate biosynthesis; chorismate biosynthesis; chorismate from D-erythrose 4-phosphate and phosphoenolpyruvate: step 7/7. Catalyzes the anti-1,4-elimination of the C-3 phosphate and the C-6 proR hydrogen from 5-enolpyruvylshikimate-3-phosphate (EPSP) to yield chorismate, which is the branch point compound that serves as the starting substrate for the three terminal pathways of aromatic amino acid biosynthesis. This reaction introduces a second double bond into the aromatic ring system. The sequence is that of Chorismate synthase from Methanothermobacter thermautotrophicus (strain ATCC 29096 / DSM 1053 / JCM 10044 / NBRC 100330 / Delta H) (Methanobacterium thermoautotrophicum).